Here is a 246-residue protein sequence, read N- to C-terminus: Eukaryotic translation initiation factor 6 (246 aa).

2 positions are modified to phosphoserine; by CK1: serine 174 and serine 175.

It belongs to the eIF-6 family. Monomer. Associates with the 60S ribosomal subunit. Post-translationally, phosphorylation at Ser-174 and Ser-175 promotes nuclear export.

It is found in the cytoplasm. The protein resides in the nucleus. The protein localises to the nucleolus. In terms of biological role, binds to the 60S ribosomal subunit and prevents its association with the 40S ribosomal subunit to form the 80S initiation complex in the cytoplasm. Is also involved in ribosome biogenesis. Associates with pre-60S subunits in the nucleus and is involved in its nuclear export. This is Eukaryotic translation initiation factor 6 (tif-6) from Neurospora crassa (strain ATCC 24698 / 74-OR23-1A / CBS 708.71 / DSM 1257 / FGSC 987).